A 730-amino-acid chain; its full sequence is Elongation factor 2 (730 aa).

Positions 19–260 constitute a tr-type G domain; it reads QRIRNIGIVA…MVIHFLPNPL (242 aa). Residues 28-35, 94-98, and 148-151 each bind GTP; these read AHIDHGKT, DTPGH, and NKVD. The residue at position 596 (His-596) is a Diphthamide.

The protein belongs to the TRAFAC class translation factor GTPase superfamily. Classic translation factor GTPase family. EF-G/EF-2 subfamily.

The protein localises to the cytoplasm. In terms of biological role, catalyzes the GTP-dependent ribosomal translocation step during translation elongation. During this step, the ribosome changes from the pre-translocational (PRE) to the post-translocational (POST) state as the newly formed A-site-bound peptidyl-tRNA and P-site-bound deacylated tRNA move to the P and E sites, respectively. Catalyzes the coordinated movement of the two tRNA molecules, the mRNA and conformational changes in the ribosome. The chain is Elongation factor 2 from Methanosarcina mazei (strain ATCC BAA-159 / DSM 3647 / Goe1 / Go1 / JCM 11833 / OCM 88) (Methanosarcina frisia).